The following is a 368-amino-acid chain: Glutamate 5-kinase (368 aa).

Residue K18 coordinates ATP. S58, D145, and N157 together coordinate substrate. Residues 177 to 178 (SD) and 218 to 224 (TGGMASK) contribute to the ATP site. The 79-residue stretch at 280 to 358 (AGSLTLDEGA…SELPGELRRP (79 aa)) folds into the PUA domain.

The protein belongs to the glutamate 5-kinase family.

The protein resides in the cytoplasm. The enzyme catalyses L-glutamate + ATP = L-glutamyl 5-phosphate + ADP. It functions in the pathway amino-acid biosynthesis; L-proline biosynthesis; L-glutamate 5-semialdehyde from L-glutamate: step 1/2. In terms of biological role, catalyzes the transfer of a phosphate group to glutamate to form L-glutamate 5-phosphate. This chain is Glutamate 5-kinase, found in Mycobacterium ulcerans (strain Agy99).